Reading from the N-terminus, the 600-residue chain is Elongation factor 4 (600 aa).

Residues 4-186 (DTIRNFSIIA…EIVKKIPPPE (183 aa)) enclose the tr-type G domain. GTP contacts are provided by residues 16–21 (DHGKST) and 133–136 (NKID).

The protein belongs to the TRAFAC class translation factor GTPase superfamily. Classic translation factor GTPase family. LepA subfamily.

It localises to the cell inner membrane. It catalyses the reaction GTP + H2O = GDP + phosphate + H(+). Functionally, required for accurate and efficient protein synthesis under certain stress conditions. May act as a fidelity factor of the translation reaction, by catalyzing a one-codon backward translocation of tRNAs on improperly translocated ribosomes. Back-translocation proceeds from a post-translocation (POST) complex to a pre-translocation (PRE) complex, thus giving elongation factor G a second chance to translocate the tRNAs correctly. Binds to ribosomes in a GTP-dependent manner. The polypeptide is Elongation factor 4 (Geobacter sulfurreducens (strain ATCC 51573 / DSM 12127 / PCA)).